The following is a 177-amino-acid chain: Nucleoside triphosphate/diphosphate phosphatase (177 aa).

The Proton donor role is filled by arginine 23. Residues asparagine 87, aspartate 103, aspartate 105, aspartate 107, aspartate 120, and glutamate 123 each coordinate Mg(2+).

Belongs to the Ntdp family. It depends on Mg(2+) as a cofactor.

The enzyme catalyses a ribonucleoside 5'-triphosphate + H2O = a ribonucleoside 5'-diphosphate + phosphate + H(+). The catalysed reaction is a ribonucleoside 5'-diphosphate + H2O = a ribonucleoside 5'-phosphate + phosphate + H(+). Has nucleoside phosphatase activity towards nucleoside triphosphates and nucleoside diphosphates. This chain is Nucleoside triphosphate/diphosphate phosphatase, found in Streptococcus pyogenes serotype M3 (strain ATCC BAA-595 / MGAS315).